Consider the following 142-residue polypeptide: Large ribosomal subunit protein mL42 (142 aa).

Residues 1 to 31 (MAAAVKWAISNRTIWKHLLPIQNGALSSACH) constitute a mitochondrion transit peptide.

It belongs to the mitochondrion-specific ribosomal protein mL42 family. Component of the mitochondrial ribosome large subunit (39S) which comprises a 16S rRNA and about 50 distinct proteins. Component of the mitochondrial ribosome small subunit (28S) which comprises a 12S rRNA and about 30 distinct proteins.

Its subcellular location is the mitochondrion. The chain is Large ribosomal subunit protein mL42 (Mrpl42) from Mus musculus (Mouse).